A 40-amino-acid polypeptide reads, in one-letter code: 67 kDa serum albumin (40 aa).

Residues 1-40 (DAEHKSEIVHRFNDLKEEKFKGAALITFAQFLHKKPEEEA) enclose the Albumin domain. His-4 lines the Cu cation pocket.

This sequence belongs to the ALB/AFP/VDB family. In terms of tissue distribution, plasma.

The protein resides in the secreted. Its function is as follows. Serum albumin, the main protein of plasma, has a good binding capacity for water, Ca(2+), Na(+), K(+), fatty acids, hormones, bilirubin and drugs. Its main function is the regulation of the colloidal osmotic pressure of blood. The chain is 67 kDa serum albumin from Trachemys scripta (Red-eared slider turtle).